Consider the following 394-residue polypeptide: Phosphoglycerate kinase (394 aa).

Substrate contacts are provided by residues 21–23 (DFN), Arg-36, 59–62 (HLGR), Arg-118, and Arg-151. Ser-183 carries the post-translational modification Phosphoserine. ATP contacts are provided by Lys-201 and Gly-292. Thr-299 carries the phosphothreonine modification. Residues Glu-323 and 350–353 (GGDS) each bind ATP.

It belongs to the phosphoglycerate kinase family. Monomer.

It localises to the cytoplasm. The catalysed reaction is (2R)-3-phosphoglycerate + ATP = (2R)-3-phospho-glyceroyl phosphate + ADP. Its pathway is carbohydrate degradation; glycolysis; pyruvate from D-glyceraldehyde 3-phosphate: step 2/5. This chain is Phosphoglycerate kinase, found in Bacillus mycoides (strain KBAB4) (Bacillus weihenstephanensis).